Here is a 306-residue protein sequence, read N- to C-terminus: Probable dimethyladenosine transferase (306 aa).

The S-adenosyl-L-methionine site is built by H30, L32, G57, E78, D106, and N121.

It belongs to the class I-like SAM-binding methyltransferase superfamily. rRNA adenine N(6)-methyltransferase family. In terms of assembly, part of the small subunit (SSU) processome, composed of more than 70 proteins and the RNA chaperone small nucleolar RNA (snoRNA) U3.

The protein localises to the nucleus. Its subcellular location is the nucleolus. It catalyses the reaction adenosine(1779)/adenosine(1780) in 18S rRNA + 4 S-adenosyl-L-methionine = N(6)-dimethyladenosine(1779)/N(6)-dimethyladenosine(1780) in 18S rRNA + 4 S-adenosyl-L-homocysteine + 4 H(+). In terms of biological role, specifically dimethylates two adjacent adenosines in the loop of a conserved hairpin near the 3'-end of 18S rRNA in the 40S particle. Involved in the pre-rRNA processing steps leading to small-subunit rRNA production independently of its RNA-modifying catalytic activity. Part of the small subunit (SSU) processome, first precursor of the small eukaryotic ribosomal subunit. During the assembly of the SSU processome in the nucleolus, many ribosome biogenesis factors, an RNA chaperone and ribosomal proteins associate with the nascent pre-rRNA and work in concert to generate RNA folding, modifications, rearrangements and cleavage as well as targeted degradation of pre-ribosomal RNA by the RNA exosome. The sequence is that of Probable dimethyladenosine transferase from Drosophila melanogaster (Fruit fly).